Reading from the N-terminus, the 103-residue chain is Small ribosomal subunit protein uS10 (103 aa).

The protein belongs to the universal ribosomal protein uS10 family. Part of the 30S ribosomal subunit.

Functionally, involved in the binding of tRNA to the ribosomes. The chain is Small ribosomal subunit protein uS10 from Shewanella frigidimarina (strain NCIMB 400).